Here is a 303-residue protein sequence, read N- to C-terminus: Zinc import ATP-binding protein ZnuC (303 aa).

Residues 17 to 232 (VSLENVGVLR…PEYVRLFGSR (216 aa)) form the ABC transporter domain. 49 to 56 (GPNGSGKS) serves as a coordination point for ATP. Residues 263-303 (DHCHPDDGHHAHEHGHAGHEHDHDHPDHAHPHAHEAGERHA) are disordered.

Belongs to the ABC transporter superfamily. Zinc importer (TC 3.A.1.15.5) family. The complex is composed of two ATP-binding proteins (ZnuC), two transmembrane proteins (ZnuB) and a solute-binding protein (ZnuA).

It localises to the cell inner membrane. The enzyme catalyses Zn(2+)(out) + ATP(in) + H2O(in) = Zn(2+)(in) + ADP(in) + phosphate(in) + H(+)(in). Functionally, part of the ABC transporter complex ZnuABC involved in zinc import. Responsible for energy coupling to the transport system. The sequence is that of Zinc import ATP-binding protein ZnuC from Rhizobium johnstonii (strain DSM 114642 / LMG 32736 / 3841) (Rhizobium leguminosarum bv. viciae).